We begin with the raw amino-acid sequence, 538 residues long: Putative outer membrane porin BglH (538 aa).

Positions 1–25 (MFRQNLITSAILLMAPLAFSAQSLA) are cleaved as a signal peptide. Residues 52-82 (KDEEKKKYTPATVNRSVSTNDQGYAANPFPT) form a disordered region. The span at 62–73 (ATVNRSVSTNDQ) shows a compositional bias: polar residues.

The protein belongs to the porin LamB (TC 1.B.3) family.

It localises to the cell outer membrane. May be a sugar porin with a broad carbohydrate specificity. This chain is Putative outer membrane porin BglH (bglH), found in Shigella flexneri.